A 415-amino-acid chain; its full sequence is UDP-N-acetylglucosamine 1-carboxyvinyltransferase (415 aa).

Residue lysine 22–asparagine 23 coordinates phosphoenolpyruvate. A UDP-N-acetyl-alpha-D-glucosamine-binding site is contributed by arginine 92. The active-site Proton donor is the cysteine 116. Cysteine 116 carries the 2-(S-cysteinyl)pyruvic acid O-phosphothioketal modification. Residues arginine 121–leucine 125, aspartate 304, and valine 326 contribute to the UDP-N-acetyl-alpha-D-glucosamine site.

This sequence belongs to the EPSP synthase family. MurA subfamily.

The protein localises to the cytoplasm. The enzyme catalyses phosphoenolpyruvate + UDP-N-acetyl-alpha-D-glucosamine = UDP-N-acetyl-3-O-(1-carboxyvinyl)-alpha-D-glucosamine + phosphate. The protein operates within cell wall biogenesis; peptidoglycan biosynthesis. Cell wall formation. Adds enolpyruvyl to UDP-N-acetylglucosamine. The polypeptide is UDP-N-acetylglucosamine 1-carboxyvinyltransferase (Halothermothrix orenii (strain H 168 / OCM 544 / DSM 9562)).